We begin with the raw amino-acid sequence, 224 residues long: Protein GrpE (224 aa).

Composition is skewed to polar residues over residues 1–16 (MSGDASTSAQDQNVES) and 209–224 (ESSSDAASEQPQEGDA). Disordered stretches follow at residues 1 to 35 (MSGDASTSAQDQNVESNDVPAIPDVDAGTPIDPVV) and 203 to 224 (SMGPGPESSSDAASEQPQEGDA).

This sequence belongs to the GrpE family. As to quaternary structure, homodimer.

It is found in the cytoplasm. Participates actively in the response to hyperosmotic and heat shock by preventing the aggregation of stress-denatured proteins, in association with DnaK and GrpE. It is the nucleotide exchange factor for DnaK and may function as a thermosensor. Unfolded proteins bind initially to DnaJ; upon interaction with the DnaJ-bound protein, DnaK hydrolyzes its bound ATP, resulting in the formation of a stable complex. GrpE releases ADP from DnaK; ATP binding to DnaK triggers the release of the substrate protein, thus completing the reaction cycle. Several rounds of ATP-dependent interactions between DnaJ, DnaK and GrpE are required for fully efficient folding. In Synechococcus sp. (strain CC9902), this protein is Protein GrpE.